Consider the following 941-residue polypeptide: Isoleucine--tRNA ligase (941 aa).

The 'HIGH' region motif lies at 69-79 (PYANGDIHIGH). L-isoleucyl-5'-AMP is bound at residue glutamate 589. The 'KMSKS' region signature appears at 630–634 (KMSKS). An ATP-binding site is contributed by lysine 633. Residues cysteine 915, cysteine 918, cysteine 932, and cysteine 935 each contribute to the Zn(2+) site.

Belongs to the class-I aminoacyl-tRNA synthetase family. IleS type 1 subfamily. As to quaternary structure, monomer. The cofactor is Zn(2+).

It localises to the cytoplasm. It catalyses the reaction tRNA(Ile) + L-isoleucine + ATP = L-isoleucyl-tRNA(Ile) + AMP + diphosphate. Catalyzes the attachment of isoleucine to tRNA(Ile). As IleRS can inadvertently accommodate and process structurally similar amino acids such as valine, to avoid such errors it has two additional distinct tRNA(Ile)-dependent editing activities. One activity is designated as 'pretransfer' editing and involves the hydrolysis of activated Val-AMP. The other activity is designated 'posttransfer' editing and involves deacylation of mischarged Val-tRNA(Ile). This is Isoleucine--tRNA ligase from Zymomonas mobilis subsp. mobilis (strain ATCC 31821 / ZM4 / CP4).